A 453-amino-acid polypeptide reads, in one-letter code: UDP-glucose 6-dehydrogenase (453 aa).

Residues 2 to 19, V11, T121, and E158 contribute to the NAD(+) site; that span reads RLCV…AACF. Substrate contacts are provided by residues 154-158, K210, N214, 255-259, and G263; these read EFLKE and FIYAG. The Nucleophile role is filled by C266. NAD(+) is bound at residue K269. K327 is a substrate binding site. Residue R334 participates in NAD(+) binding.

It belongs to the UDP-glucose/GDP-mannose dehydrogenase family.

The enzyme catalyses UDP-alpha-D-glucose + 2 NAD(+) + H2O = UDP-alpha-D-glucuronate + 2 NADH + 3 H(+). It participates in nucleotide-sugar biosynthesis; UDP-alpha-D-glucuronate biosynthesis; UDP-alpha-D-glucuronate from UDP-alpha-D-glucose: step 1/1. Its pathway is bacterial outer membrane biogenesis; lipopolysaccharide biosynthesis. This chain is UDP-glucose 6-dehydrogenase (udg), found in Pseudomonas aeruginosa (strain ATCC 15692 / DSM 22644 / CIP 104116 / JCM 14847 / LMG 12228 / 1C / PRS 101 / PAO1).